The chain runs to 197 residues: Probable proteasome subunit beta type-4 (197 aa).

Belongs to the peptidase T1B family. In terms of assembly, the 26S proteasome consists of a 20S proteasome core and two 19S regulatory subunits. The 20S proteasome core is composed of 28 subunits that are arranged in four stacked rings, resulting in a barrel-shaped structure. The two end rings are each formed by seven alpha subunits, and the two central rings are each formed by seven beta subunits. The catalytic chamber with the active sites is on the inside of the barrel.

The protein resides in the cytoplasm. It localises to the nucleus. In terms of biological role, non-catalytic component of the proteasome which degrades poly-ubiquitinated proteins in the cytoplasm and in the nucleus. It is essential for the regulated turnover of proteins and for the removal of misfolded proteins. The proteasome is a multicatalytic proteinase complex that is characterized by its ability to cleave peptides with Arg, Phe, Tyr, Leu, and Glu adjacent to the leaving group at neutral or slightly basic pH. It has an ATP-dependent proteolytic activity. This is Probable proteasome subunit beta type-4 (PRE1) from Encephalitozoon cuniculi (strain GB-M1) (Microsporidian parasite).